The primary structure comprises 143 residues: Large ribosomal subunit protein uL11 (143 aa).

It belongs to the universal ribosomal protein uL11 family. As to quaternary structure, part of the ribosomal stalk of the 50S ribosomal subunit. Interacts with L10 and the large rRNA to form the base of the stalk. L10 forms an elongated spine to which L12 dimers bind in a sequential fashion forming a multimeric L10(L12)X complex. Post-translationally, one or more lysine residues are methylated.

Its function is as follows. Forms part of the ribosomal stalk which helps the ribosome interact with GTP-bound translation factors. This chain is Large ribosomal subunit protein uL11, found in Azotobacter vinelandii (strain DJ / ATCC BAA-1303).